The primary structure comprises 340 residues: Ferrochelatase (340 aa).

Fe cation-binding residues include H189 and E292.

This sequence belongs to the ferrochelatase family.

The protein localises to the cytoplasm. It catalyses the reaction heme b + 2 H(+) = protoporphyrin IX + Fe(2+). The protein operates within porphyrin-containing compound metabolism; protoheme biosynthesis; protoheme from protoporphyrin-IX: step 1/1. Functionally, catalyzes the ferrous insertion into protoporphyrin IX. This Pseudomonas aeruginosa (strain UCBPP-PA14) protein is Ferrochelatase.